The following is a 484-amino-acid chain: ATP synthase subunit beta (484 aa).

An ATP-binding site is contributed by 156–163 (GGAGVGKT).

This sequence belongs to the ATPase alpha/beta chains family. In terms of assembly, F-type ATPases have 2 components, CF(1) - the catalytic core - and CF(0) - the membrane proton channel. CF(1) has five subunits: alpha(3), beta(3), gamma(1), delta(1), epsilon(1). CF(0) has three main subunits: a(1), b(2) and c(9-12). The alpha and beta chains form an alternating ring which encloses part of the gamma chain. CF(1) is attached to CF(0) by a central stalk formed by the gamma and epsilon chains, while a peripheral stalk is formed by the delta and b chains.

The protein resides in the cell inner membrane. It carries out the reaction ATP + H2O + 4 H(+)(in) = ADP + phosphate + 5 H(+)(out). Produces ATP from ADP in the presence of a proton gradient across the membrane. The catalytic sites are hosted primarily by the beta subunits. This Rhizorhabdus wittichii (strain DSM 6014 / CCUG 31198 / JCM 15750 / NBRC 105917 / EY 4224 / RW1) (Sphingomonas wittichii) protein is ATP synthase subunit beta.